The sequence spans 570 residues: Molecular chaperone MKKS (570 aa).

ATP is bound at residue E192–S199. The interval K198–V370 is substrate-binding apical domain.

The protein belongs to the TCP-1 chaperonin family. Component of a complex composed at least of MKKS, BBS10, BBS12, TCP1, CCT2, CCT3, CCT4, CCT5 and CCT8. Interacts with STUB1. Interacts with BBS2 (via coiled coil domain). Interacts with CCDC28B. Interacts with BBS12. Interacts with SMARCC1, a component of the SWI/SNF complexes; the interaction takes place predominantly in the cytoplasm and may modulate SMARCC1 location. Interacts with DLEC1. As to expression, widely expressed in adult and fetal tissues. Expressed in the developing heart, brain retina, limb buds, as well as in the developing neural tube. Expressed in the embryo in the first and second branchial arches. Expressed in parafin embedded tissue sections of brain, kidney, retina, olfactory epithelium and the ependymal layer of ventricles. Detected only in restricted regions of these tissue sections, including the ciliated border of renal tubules, the connecting cilium and the inner and outer nuclear layers of retina, and the ciliated layer of olfactory epithelia.

The protein resides in the cytoplasm. It is found in the cytoskeleton. The protein localises to the microtubule organizing center. It localises to the centrosome. Its subcellular location is the cytosol. The protein resides in the nucleus. Its function is as follows. Probable molecular chaperone that assists the folding of proteins upon ATP hydrolysis. Plays a role in the assembly of BBSome, a complex involved in ciliogenesis regulating transports vesicles to the cilia. May play a role in protein processing in limb, cardiac and reproductive system development. May play a role in cytokinesis. This chain is Molecular chaperone MKKS (Mkks), found in Mus musculus (Mouse).